A 688-amino-acid polypeptide reads, in one-letter code: G protein-coupled receptor kinase 3 (688 aa).

The tract at residues 1–190 is N-terminal; sequence MADLEAVLAD…ELNIHLSMND (190 aa). Residues 54 to 175 enclose the RGS domain; sequence TFDKIFNQKI…MESEKFTRFC (122 aa). One can recognise a Protein kinase domain in the interval 191 to 453; sequence FSVHRIIGRG…ARELKEHIFF (263 aa). Residues 197-205 and K220 each bind ATP; that span reads IGRGGFGEV. The active-site Proton acceptor is D317. Residues 454–521 form the AGC-kinase C-terminal domain; the sequence is KGIDWQYVYL…MISERWQQEV (68 aa). A PH domain is found at 558–652; that stretch reads DCIMHGYMLK…WLKELTCTFN (95 aa).

This sequence belongs to the protein kinase superfamily. AGC Ser/Thr protein kinase family. GPRK subfamily. In terms of assembly, interacts with GIT1. Ubiquitinated. In terms of tissue distribution, expressed in brain cortex, hippocampus, striatum, hypothalamus, cerebellum and brainstem (at protein level).

Its subcellular location is the postsynapse. It is found in the presynapse. The catalysed reaction is [beta-adrenergic receptor] + ATP = [beta-adrenergic receptor]-phosphate + ADP + H(+). Functionally, specifically phosphorylates the agonist-occupied form of the beta-adrenergic and closely related receptors. This Rattus norvegicus (Rat) protein is G protein-coupled receptor kinase 3.